A 596-amino-acid chain; its full sequence is Fructan 1-exohydrolase w3 (596 aa).

The signal sequence occupies residues 1–20 (MAQAWAFLLPVLVLGSYVTS). Residue aspartate 75 is part of the active site. 3 N-linked (GlcNAc...) asparagine glycosylation sites follow: asparagine 168, asparagine 236, and asparagine 248. Residues cysteine 446 and cysteine 492 are joined by a disulfide bond.

The protein belongs to the glycosyl hydrolase 32 family. In terms of tissue distribution, expressed in the stem, particularly the penultimate internode. Little expression is detected in roots and in the peduncle part of the stem.

The enzyme catalyses Hydrolysis of terminal, non-reducing (2-&gt;1)-linked beta-D-fructofuranose residues in fructans.. Its activity is regulated as follows. Inhibited by sucrose. Functionally, hydrolyzes inulin-type beta-(2,1)-fructans and beta-(2,1)-linkages in branched fructans. Has low activity against beta-(2,6)-linked fructans. May play a role as a beta-(2,1)-trimmer during graminan biosynthesis. This is Fructan 1-exohydrolase w3 from Triticum aestivum (Wheat).